The sequence spans 54 residues: Large ribosomal subunit protein bL33A (54 aa).

It belongs to the bacterial ribosomal protein bL33 family.

The sequence is that of Large ribosomal subunit protein bL33A from Streptomyces avermitilis (strain ATCC 31267 / DSM 46492 / JCM 5070 / NBRC 14893 / NCIMB 12804 / NRRL 8165 / MA-4680).